Consider the following 575-residue polypeptide: Dihydroxy-acid dehydratase (575 aa).

Residues 1-27 (MSNQERQERPEKDPDLRSTEVTEGYEK) form a disordered region. Residue cysteine 61 participates in [2Fe-2S] cluster binding. Aspartate 93 is a Mg(2+) binding site. Position 134 (cysteine 134) interacts with [2Fe-2S] cluster. Residues aspartate 135 and lysine 136 each coordinate Mg(2+). N6-carboxylysine is present on lysine 136. Cysteine 206 is a [2Fe-2S] cluster binding site. Position 460 (glutamate 460) interacts with Mg(2+). The Proton acceptor role is filled by serine 486.

This sequence belongs to the IlvD/Edd family. As to quaternary structure, homodimer. It depends on [2Fe-2S] cluster as a cofactor. Mg(2+) is required as a cofactor.

The enzyme catalyses (2R)-2,3-dihydroxy-3-methylbutanoate = 3-methyl-2-oxobutanoate + H2O. It catalyses the reaction (2R,3R)-2,3-dihydroxy-3-methylpentanoate = (S)-3-methyl-2-oxopentanoate + H2O. The protein operates within amino-acid biosynthesis; L-isoleucine biosynthesis; L-isoleucine from 2-oxobutanoate: step 3/4. Its pathway is amino-acid biosynthesis; L-valine biosynthesis; L-valine from pyruvate: step 3/4. Functions in the biosynthesis of branched-chain amino acids. Catalyzes the dehydration of (2R,3R)-2,3-dihydroxy-3-methylpentanoate (2,3-dihydroxy-3-methylvalerate) into 2-oxo-3-methylpentanoate (2-oxo-3-methylvalerate) and of (2R)-2,3-dihydroxy-3-methylbutanoate (2,3-dihydroxyisovalerate) into 2-oxo-3-methylbutanoate (2-oxoisovalerate), the penultimate precursor to L-isoleucine and L-valine, respectively. This Haloarcula marismortui (strain ATCC 43049 / DSM 3752 / JCM 8966 / VKM B-1809) (Halobacterium marismortui) protein is Dihydroxy-acid dehydratase.